The chain runs to 296 residues: MSLYENKKVVAIGGGHGLGRMLAALKVFGSNATGIVTTTDNGGSTGRIRHCQGGIAWGDTRNCINQLITEPSISSMMFEYRFKGAGELNGHNLGNLMLTALDNLSVRPLDAINLIRNMLKVDVNILPMSEHPSDLAALAMDGKWVTGETSVDEMTQDLRRLDLAPEVPATKEAVTAIQDADCVILGPGSFLTSVMPPLLLPELGKAIARNQTAKVIFVENLSPEYGPAGRMSLEQKLEWCERACQGRKIDVVLGHHPHPELEQRWNFVTRDLASANRDWRHDRQKLRQAIEEQLMN.

This sequence belongs to the gluconeogenesis factor family.

It localises to the cytoplasm. Its function is as follows. Required for morphogenesis under gluconeogenic growth conditions. In Vibrio cholerae serotype O1 (strain ATCC 39315 / El Tor Inaba N16961), this protein is Putative gluconeogenesis factor.